The sequence spans 166 residues: Peptidyl-prolyl cis-trans isomerase cyp18 (166 aa).

The PPIase cyclophilin-type domain maps to 2–164; that stretch reads STVELNTSAG…QPVVIESAKI (163 aa).

It belongs to the cyclophilin-type PPIase family. Monomer.

It is found in the cytoplasm. The catalysed reaction is [protein]-peptidylproline (omega=180) = [protein]-peptidylproline (omega=0). Inhibition by cyclosporin A with a Ki of 21 mu-mol. Functionally, PPIases accelerate the folding of proteins. It catalyzes the cis-trans isomerization of proline imidic peptide bonds in oligopeptides. The polypeptide is Peptidyl-prolyl cis-trans isomerase cyp18 (Streptomyces antibioticus).